Here is a 183-residue protein sequence, read N- to C-terminus: Dual-action ribosomal maturation protein DarP (183 aa).

It belongs to the DarP family.

It localises to the cytoplasm. In terms of biological role, member of a network of 50S ribosomal subunit biogenesis factors which assembles along the 30S-50S interface, preventing incorrect 23S rRNA structures from forming. Promotes peptidyl transferase center (PTC) maturation. In Klebsiella pneumoniae (strain 342), this protein is Dual-action ribosomal maturation protein DarP.